A 345-amino-acid polypeptide reads, in one-letter code: Altered inheritance of mitochondria protein 39, mitochondrial (345 aa).

A mitochondrion-targeting transit peptide spans M1–Y29. Positions N46–D91 are disordered. Over residues K64 to H75 the composition is skewed to polar residues. A compositionally biased stretch (low complexity) spans N76–S89. Residues L113–L133 traverse the membrane as a helical segment.

Belongs to the AIM39 family.

Its subcellular location is the mitochondrion membrane. The protein is Altered inheritance of mitochondria protein 39, mitochondrial (AIM39) of Vanderwaltozyma polyspora (strain ATCC 22028 / DSM 70294 / BCRC 21397 / CBS 2163 / NBRC 10782 / NRRL Y-8283 / UCD 57-17) (Kluyveromyces polysporus).